Here is a 401-residue protein sequence, read N- to C-terminus: MKLRALDISEANSYIKRILINDPILSNLKVKGEISNFKVHSSGNVYLSLKDETSKLNCVIFKSNFNRNLKLDNGVKIIANGYISVYERDGAYQLYINEIEIEGIGNLHIEFNRLKEKLNKEGLFDPKYKIPIPKMPNSIGVITSPTGAVIRDIINVIKRRYPKVNIKLYPVTVQGDKSAEEICEAIRFFNHMKNVDTLIVGRGGGSIEELWSFNDEMVAREVFNSQIPIISAVGHETDFTICDFVSDMRAPTPSAAAEIATPSLDDINYKLGNIKSRMSKSLTNQIELDQYRLETVFNKINNYLDSYTIKDKVIQLDKIYDKIIFGIENNLKLEDEKLVKIGALLHNLSPLATMDRGYSITQKNGKVINSIKGLKIKDSIDIVLKDGNLECMIDKIENKEG.

The protein belongs to the XseA family. Heterooligomer composed of large and small subunits.

It is found in the cytoplasm. It carries out the reaction Exonucleolytic cleavage in either 5'- to 3'- or 3'- to 5'-direction to yield nucleoside 5'-phosphates.. Its function is as follows. Bidirectionally degrades single-stranded DNA into large acid-insoluble oligonucleotides, which are then degraded further into small acid-soluble oligonucleotides. This chain is Exodeoxyribonuclease 7 large subunit, found in Clostridioides difficile (strain 630) (Peptoclostridium difficile).